We begin with the raw amino-acid sequence, 209 residues long: Ribosomal RNA large subunit methyltransferase E (209 aa).

Positions 63, 65, 83, 99, and 124 each coordinate S-adenosyl-L-methionine. The active-site Proton acceptor is the K164.

This sequence belongs to the class I-like SAM-binding methyltransferase superfamily. RNA methyltransferase RlmE family.

The protein localises to the cytoplasm. The catalysed reaction is uridine(2552) in 23S rRNA + S-adenosyl-L-methionine = 2'-O-methyluridine(2552) in 23S rRNA + S-adenosyl-L-homocysteine + H(+). In terms of biological role, specifically methylates the uridine in position 2552 of 23S rRNA at the 2'-O position of the ribose in the fully assembled 50S ribosomal subunit. This chain is Ribosomal RNA large subunit methyltransferase E, found in Pseudoalteromonas translucida (strain TAC 125).